Here is a 240-residue protein sequence, read N- to C-terminus: Ribose-5-phosphate isomerase A (240 aa).

Residues 41-44 (TGST), 94-97 (DGAD), and 107-110 (KGGG) each bind substrate. Residue glutamate 116 is the Proton acceptor of the active site. A substrate-binding site is contributed by lysine 134.

This sequence belongs to the ribose 5-phosphate isomerase family. In terms of assembly, homodimer.

It carries out the reaction aldehydo-D-ribose 5-phosphate = D-ribulose 5-phosphate. Its pathway is carbohydrate degradation; pentose phosphate pathway; D-ribose 5-phosphate from D-ribulose 5-phosphate (non-oxidative stage): step 1/1. Functionally, catalyzes the reversible conversion of ribose-5-phosphate to ribulose 5-phosphate. This is Ribose-5-phosphate isomerase A from Polaromonas sp. (strain JS666 / ATCC BAA-500).